The chain runs to 156 residues: Protein OXIDATIVE STRESS 3 LIKE 3 (156 aa).

The interval 1-67 (MHYQEQMESL…GLSKHYKGKS (67 aa)) is disordered. The segment covering 13–26 (GEERRRGNYTRDVD) has biased composition (basic and acidic residues).

It is found in the nucleus. In terms of biological role, promotes slightly the tolerance to oxidizing chemicals (e.g. diamide). The polypeptide is Protein OXIDATIVE STRESS 3 LIKE 3 (Arabidopsis thaliana (Mouse-ear cress)).